The chain runs to 414 residues: Probable 26S proteasome regulatory subunit 6B (414 aa).

202–209 (GPPGCGKT) contacts ATP.

The protein belongs to the AAA ATPase family.

The protein resides in the cytoplasm. The protein localises to the nucleus. In terms of biological role, the 26S proteasome is involved in the ATP-dependent degradation of ubiquitinated proteins. The regulatory (or ATPase) complex confers ATP dependency and substrate specificity to the 26S complex. This Caenorhabditis elegans protein is Probable 26S proteasome regulatory subunit 6B (rpt-3).